Reading from the N-terminus, the 413-residue chain is Phosphopentomutase (413 aa).

6 residues coordinate Mn(2+): aspartate 11, aspartate 306, histidine 311, aspartate 347, histidine 348, and histidine 359.

The protein belongs to the phosphopentomutase family. The cofactor is Mn(2+).

The protein localises to the cytoplasm. The catalysed reaction is 2-deoxy-alpha-D-ribose 1-phosphate = 2-deoxy-D-ribose 5-phosphate. It carries out the reaction alpha-D-ribose 1-phosphate = D-ribose 5-phosphate. The protein operates within carbohydrate degradation; 2-deoxy-D-ribose 1-phosphate degradation; D-glyceraldehyde 3-phosphate and acetaldehyde from 2-deoxy-alpha-D-ribose 1-phosphate: step 1/2. In terms of biological role, isomerase that catalyzes the conversion of deoxy-ribose 1-phosphate (dRib-1-P) and ribose 1-phosphate (Rib-1-P) to deoxy-ribose 5-phosphate (dRib-5-P) and ribose 5-phosphate (Rib-5-P), respectively. In Helicobacter pylori (strain J99 / ATCC 700824) (Campylobacter pylori J99), this protein is Phosphopentomutase.